Here is an 852-residue protein sequence, read N- to C-terminus: Cell surface glycoprotein (852 aa).

Positions 1–34 are cleaved as a signal peptide; it reads MTDTTGKLRAVLLTALMVGSVIGAGVAFTGGAAA. Residue asparagine 36 is glycosylated (N-linked (GalNAc...) (glycosaminoglycan) asparagine). A disordered region spans residues 84 to 131; sequence KLDNEKEVSPATLSRTGGSDEGVPLQMPIPEDQSTGSYDSNGPDNDEA. Residues 115-126 are compositionally biased toward polar residues; sequence DQSTGSYDSNGP. 8 N-linked (Glc...) asparagine glycosylation sites follow: asparagine 339, asparagine 398, asparagine 438, asparagine 513, asparagine 643, asparagine 727, asparagine 751, and asparagine 787. The segment at 772 to 828 is disordered; the sequence is ELEEPDQTTVDQPENNQTMTTTMTETTTETTTEMTTTQENTTENGSEGTSDGESGGS. The span at 785–823 shows a compositional bias: low complexity; the sequence is ENNQTMTTTMTETTTETTTEMTTTQENTTENGSEGTSDG. Residues threonine 789, threonine 791, threonine 792, threonine 793, threonine 795, threonine 797, threonine 798, threonine 799, threonine 801, threonine 802, threonine 803, threonine 806, threonine 807, and threonine 808 are each glycosylated (O-linked (Gal...) threonine). Residue asparagine 811 is glycosylated (N-linked (Glc...) asparagine). Threonine 812 and threonine 813 each carry an O-linked (Gal...) threonine glycan. Asparagine 815 carries an N-linked (Glc...) asparagine glycan. The chain crosses the membrane as a helical span at residues 829–849; that stretch reads IPGFGVGVALVAVLGAALLAL. The PGF sorting signal signature appears at 830 to 832; the sequence is PGF.

This sequence belongs to the halobacterial S-layer protein family. In terms of processing, N-linked glycan at Asn-36 consists of a glycosaminoglycan chain, constructed by a repeating sulfated pentasaccharide block composed of GlcNAc, GalNAc, Gal, GalA, 3-O-methyl-GalA, and sulfate in the molar ratio of 1:1:1:1:1:2; the other N-linked glycans contain Glc, GlcA and IdoA. Post-translationally, O-linked glycans consist of Glc-Gal disaccharides. The C-terminus (residues 770-778) is lipidated with diphytanylglyceryl phosphate. In terms of processing, cleaved by the archaeosortase ArtA at the C-terminus, with removal of a short hydrophobic segment.

It localises to the secreted. It is found in the cell wall. Its subcellular location is the S-layer. The protein localises to the cell membrane. In terms of biological role, S-layer protein. The S-layer is a paracrystalline mono-layered assembly of proteins which coat the surface of the cell. The chain is Cell surface glycoprotein (csg) from Halobacterium salinarum (strain ATCC 29341 / DSM 671 / R1).